A 235-amino-acid chain; its full sequence is Ribosomal RNA small subunit methyltransferase G (235 aa).

S-adenosyl-L-methionine contacts are provided by residues Gly-74, Phe-79, 97–99, 125–126, and Arg-144; these read EAT and AE.

Belongs to the methyltransferase superfamily. RNA methyltransferase RsmG family.

The protein resides in the cytoplasm. Specifically methylates the N7 position of a guanine in 16S rRNA. This chain is Ribosomal RNA small subunit methyltransferase G, found in Dehalococcoides mccartyi (strain ATCC BAA-2100 / JCM 16839 / KCTC 5957 / BAV1).